The primary structure comprises 545 residues: MFILNNRKWRKLKRDPSAFFRDSKFNFLRYFSAKKFAKNFKNSSHIHKTNISKAQSNISSTLKQNRKQDMLIPINFFNFEYIVKKLNNQNAIGVYILPSNLTLKPALCILESHKEDFLNKFLLTISSENLKLQYKFNGQIKNPKSVNEIWTDLFSIAHVDMKLSTDRTLSSSISQFWFRLEFCKEDKDFILFPTANRYSRKLWKHSIKNNQLFKEGIRNYSEISSLPYEEDHNFDIDLVFTWVNSEDKNWQELYKKYKPDFNSDATSTSRFLSRDELKFALRSWEMNGSFIRKIFIVSNCAPPAWLDLNNPKIQWVYHEEIMPQSALPTFSSHAIETSLHHIPGISNYFIYSNXDFLLTKPLNKDNFFYSNGIAKLRLEAWGNVNGECTEGEPDYLNGARNANTLLEKEFKKFTTKLHTHSPQSMRTDILFEMEKKYPEEFNRTLHNKFRSLDDIAVTGYLYHHYALLSGRALQSSDKTELVQQNHDFKKKLNNVVTLTKERNFDKLPLSVCINDGADSHLNEEWNVQVIKFLETLFPLPSSFEK.

The protein belongs to the stealth family.

Functionally, may be the polymerase that links individual UDP-N-acetyl-D-mannosamine monomers. In serotype A the capsule is composed of repeated units of (alpha 1-6)-linked N-acetyl-D-mannosamine-1-phosphate. This Neisseria meningitidis serogroup A protein is Capsular polysaccharide phosphotransferase SacB (sacB).